We begin with the raw amino-acid sequence, 521 residues long: CD166 antigen (521 aa).

Residues 1–465 (GSPVFIAFRS…NREQVNHRAT (465 aa)) are Extracellular-facing. Residues N33, N105, N244, N299, N395, N418, and N437 are each glycosylated (N-linked (GlcNAc...) asparagine). The Ig-like V-type 2 domain maps to 63–172 (PTIVKVFKQP…YGPSGQKTVQ (110 aa)). Intrachain disulfides connect C95–C158, C208–C251, C292–C330, and C373–C423. 3 consecutive Ig-like C2-type domains span residues 183 to 266 (PTEQ…TAIT), 271 to 347 (DLSL…ESLT), and 354 to 439 (PQIK…LNVS). The helical transmembrane segment at 466-487 (LIVGIVLRLLHGALVAGVVYWL) threads the bilayer. The Cytoplasmic portion of the chain corresponds to 488–521 (YVKKSKTASKHVNKDLGNLEENKKLEQNNHRTEA). Positions 500-521 (NKDLGNLEENKKLEQNNHRTEA) are disordered. Over residues 507 to 521 (EENKKLEQNNHRTEA) the composition is skewed to basic and acidic residues.

In terms of assembly, homodimer. Interacts (via extracellular domain) with CD6 (via extracellular domain). Homodimerization and interaction with CD6 involve the same region and cannot occur simultaneously. The affinity for CD6 is much higher than the affinity for self-association. Interacts (via glycosylated extracellular domain) with LGALS1 and LGALS3. Interaction with LGALS1 or LGALS3 inhibits interaction with CD6. Post-translationally, glycosylated.

The protein resides in the cell membrane. Its subcellular location is the cell projection. It is found in the axon. It localises to the dendrite. In terms of biological role, cell adhesion molecule that mediates both heterotypic cell-cell contacts via its interaction with CD6, as well as homotypic cell-cell contacts. Promotes T-cell activation and proliferation via its interactions with CD6. Contributes to the formation and maturation of the immunological synapse via its interactions with CD6. Mediates homotypic interactions with cells that express ALCAM. Mediates attachment of dendritic cells onto endothelial cells via homotypic interaction. Inhibits endothelial cell migration and promotes endothelial tube formation via homotypic interactions. Required for normal organization of the lymph vessel network. Required for normal hematopoietic stem cell engraftment in the bone marrow. Plays a role in hematopoiesis; required for normal numbers of hematopoietic stem cells in bone marrow. Promotes in vitro osteoblast proliferation and differentiation. Promotes neurite extension, axon growth and axon guidance; axons grow preferentially on surfaces that contain ALCAM. Mediates outgrowth and pathfinding for retinal ganglion cell axons. The polypeptide is CD166 antigen (ALCAM) (Canis lupus familiaris (Dog)).